The following is a 316-amino-acid chain: Pantothenate kinase (316 aa).

95-102 (GSVAVGKS) is a binding site for ATP.

It belongs to the prokaryotic pantothenate kinase family.

The protein resides in the cytoplasm. The enzyme catalyses (R)-pantothenate + ATP = (R)-4'-phosphopantothenate + ADP + H(+). It participates in cofactor biosynthesis; coenzyme A biosynthesis; CoA from (R)-pantothenate: step 1/5. In Shigella dysenteriae serotype 1 (strain Sd197), this protein is Pantothenate kinase.